We begin with the raw amino-acid sequence, 60 residues long: Short neurotoxin 1 (60 aa).

Cystine bridges form between Cys3–Cys22, Cys17–Cys39, Cys41–Cys52, and Cys53–Cys58.

The protein belongs to the three-finger toxin family. Short-chain subfamily. Type I alpha-neurotoxin sub-subfamily. As to expression, expressed by the venom gland.

The protein localises to the secreted. Functionally, binds to muscle nicotinic acetylcholine receptor (nAChR) and inhibit acetylcholine from binding to the receptor, thereby impairing neuromuscular transmission. This is Short neurotoxin 1 from Hydrophis schistosus (Beaked sea snake).